The following is a 334-amino-acid chain: Probable 3-hydroxyisobutyrate dehydrogenase-like 1, mitochondrial (334 aa).

Residues 1–23 (MPLLLRRFPSPSVVSSFFLRRSM) constitute a mitochondrion transit peptide. Alanine 24 is subject to N-acetylalanine. NAD(+) contacts are provided by residues 38-67 (TKIG…TVFN) and threonine 133. Residue lysine 207 is part of the active site. Residue lysine 275 participates in NAD(+) binding.

This sequence belongs to the HIBADH-related family. 3-hydroxyisobutyrate dehydrogenase subfamily.

Its subcellular location is the mitochondrion. The enzyme catalyses 3-hydroxy-2-methylpropanoate + NAD(+) = 2-methyl-3-oxopropanoate + NADH + H(+). The protein operates within amino-acid degradation; L-valine degradation. The polypeptide is Probable 3-hydroxyisobutyrate dehydrogenase-like 1, mitochondrial (Arabidopsis thaliana (Mouse-ear cress)).